Consider the following 463-residue polypeptide: Gamma-aminobutyric acid receptor subunit alpha-5 (463 aa).

The N-terminal stretch at 1-25 (MDNGMLSRFIMTQTLLVFCISMTLS) is a signal peptide. Residues 26–260 (SHFGFSQMPT…FHLKRKIGYF (235 aa)) lie on the Extracellular side of the membrane. An N-linked (GlcNAc...) asparagine glycan is attached at asparagine 45. Arginine 101 lines the 4-aminobutanoate pocket. Residue asparagine 145 is glycosylated (N-linked (GlcNAc...) asparagine). Threonine 164 provides a ligand contact to 4-aminobutanoate. A disulfide bridge connects residues cysteine 173 and cysteine 187. N-linked (GlcNAc...) asparagine glycosylation is found at asparagine 207 and asparagine 236. 3 consecutive transmembrane segments (helical) span residues 261 to 281 (VIQTYLPCIMTVILSQVSFWL), 287 to 308 (PARTVFGVTTVLTMTTLSISAR), and 319 to 340 (AMDWFIAVCYAFVFSALIEFAT). At 341 to 428 (VNYFTKRGWA…TYNSISKIDK (88 aa)) the chain is on the cytoplasmic side. Lysine 355 is covalently cross-linked (Glycyl lysine isopeptide (Lys-Gly) (interchain with G-Cter in ubiquitin)). The interval 387-408 (PNIPKEQPPAGTANAPTVSIKA) is disordered. Residues 429–449 (MSRIVFPILFGTFNLVYWATY) form a helical membrane-spanning segment.

Belongs to the ligand-gated ion channel (TC 1.A.9) family. Gamma-aminobutyric acid receptor (TC 1.A.9.5) subfamily. GABRA5 sub-subfamily. As to quaternary structure, heteropentamer, formed by a combination of alpha (GABRA1-6), beta (GABRB1-3), gamma (GABRG1-3), delta (GABRD), epsilon (GABRE), rho (GABRR1-3), pi (GABRP) and theta (GABRQ) chains, each subunit exhibiting distinct physiological and pharmacological properties. In terms of tissue distribution, expressed in brain, in hippocampal pyramidal neurons.

It localises to the postsynaptic cell membrane. The protein resides in the cell membrane. It carries out the reaction chloride(in) = chloride(out). Alpha subunit of the heteropentameric ligand-gated chloride channel gated by gamma-aminobutyric acid (GABA), a major inhibitory neurotransmitter in the brain. GABA-gated chloride channels, also named GABA(A) receptors (GABAAR), consist of five subunits arranged around a central pore and contain GABA active binding site(s) located at the alpha and beta subunit interface(s). When activated by GABA, GABAARs selectively allow the flow of chloride anions across the cell membrane down their electrochemical gradient. GABAARs containing alpha-5/GABRA5 are mainly extrasynaptic and contribute to the tonic GABAergic inhibition of the hippocampus. Extrasynaptic alpha-5-containing GABAARs in CA1 pyramidal neurons play a role in learning and memory processes. This Mus musculus (Mouse) protein is Gamma-aminobutyric acid receptor subunit alpha-5.